The following is a 656-amino-acid chain: ATP-dependent zinc metalloprotease FtsH (656 aa).

Residues 1–45 (MAIFARRIGLNQHSAYGSRQRVIVMKNFGKKALIKQQSPKRVAWT) are Cytoplasmic-facing. Residues 46–66 (GALAASLIMLPTMFGGNPVLA) form a helical membrane-spanning segment. At 67–147 (QKAERESLSY…EISSANSRAA (81 aa)) the chain is on the lumenal side. The chain crosses the membrane as a helical span at residues 148–168 (VGLLINLMWILPLVALMLLFL). Topologically, residues 169–656 (RRSTNASSQA…DEQLSMVNSQ (488 aa)) are cytoplasmic. 239–246 (GPPGTGKT) contacts ATP. Residue H460 coordinates Zn(2+). E461 is an active-site residue. Zn(2+) contacts are provided by H464 and D538.

It in the central section; belongs to the AAA ATPase family. This sequence in the C-terminal section; belongs to the peptidase M41 family. As to quaternary structure, homohexamer. It depends on Zn(2+) as a cofactor.

The protein localises to the cellular thylakoid membrane. Functionally, acts as a processive, ATP-dependent zinc metallopeptidase for both cytoplasmic and membrane proteins. Plays a role in the quality control of integral membrane proteins. The polypeptide is ATP-dependent zinc metalloprotease FtsH (Nostoc sp. (strain PCC 7120 / SAG 25.82 / UTEX 2576)).